We begin with the raw amino-acid sequence, 271 residues long: Zinc finger protein 501 (271 aa).

C2H2-type zinc fingers lie at residues S22–H44, Y50–H72, Y78–H100, Y106–H128, Y134–H156, F162–H184, Y190–H212, Y218–H240, and Y246–H268.

It belongs to the krueppel C2H2-type zinc-finger protein family.

It is found in the nucleus. It localises to the nucleolus. Its function is as follows. May be involved in transcriptional regulation. Essential for Golgi structural integrity. The chain is Zinc finger protein 501 (ZNF501) from Homo sapiens (Human).